The primary structure comprises 203 residues: Bone marrow stromal antigen 2 (203 aa).

The Cytoplasmic segment spans residues 1–26 (MAPTFYHYHPLPMDQKEPGCGIRWRC). The helical; Signal-anchor for type II membrane protein transmembrane segment at 27-47 (LAAASVLILVALVIPLIIFAV) threads the bilayer. The Extracellular portion of the chain corresponds to 48-183 (KANSEACRDG…EASITSKQNS (136 aa)). Residues Asn-66 and Asn-93 are each glycosylated (N-linked (GlcNAc...) asparagine). Positions 66 to 178 (NTTRLLQRQL…LRTAEEASIT (113 aa)) form a coiled coil. The GPI-anchor amidated serine moiety is linked to residue Ser-183. Positions 184 to 203 (AGSMAVSSLLVLAVPLFLLF) are cleaved as a propeptide — removed in mature form.

In terms of assembly, parallel homodimer; disulfide-linked. May form homotetramers under reducing conditions. Isoform 1 and isoform 2 form homodimers and also heterodimers with each other. Dimerization is essential for its antiviral activity. Interacts (via cytoplasmic domain) with ARHGAP44. Interacts with MMP14 (via C-terminal cytoplasmic tail). Interacts with LILRA4/ILT7. Interacts with RNF115. In terms of processing, the GPI anchor is essential for its antiviral activity.

Its subcellular location is the golgi apparatus. It localises to the trans-Golgi network. The protein resides in the cell membrane. The protein localises to the late endosome. It is found in the membrane raft. Its subcellular location is the cytoplasm. It localises to the apical cell membrane. In terms of biological role, IFN-induced antiviral host restriction factor which efficiently blocks the release of diverse mammalian enveloped viruses by directly tethering nascent virions to the membranes of infected cells. Acts as a direct physical tether, holding virions to the cell membrane and linking virions to each other. The tethered virions can be internalized by endocytosis and subsequently degraded or they can remain on the cell surface. In either case, their spread as cell-free virions is restricted. Its target viruses belong to diverse families, including retroviridae: human immunodeficiency virus type 1 (HIV-1), mouse mammary tumor virus (MMTV) and murine leukemia virus (MLV), filoviridae: ebola virus (EBOV), arenaviridae: lassa virus (LASV), and rhabdoviridae: vesicular stomatitis virus (VSV). Can inhibit cell surface proteolytic activity of MMP14 causing decreased activation of MMP15 which results in inhibition of cell growth and migration. Can stimulate signaling by LILRA4/ILT7 and consequently provide negative feedback to the production of IFN by plasmacytoid dendritic cells in response to viral infection. Plays a role in the organization of the subapical actin cytoskeleton in polarized epithelial cells. In Cricetulus griseus (Chinese hamster), this protein is Bone marrow stromal antigen 2 (Bst2).